Consider the following 245-residue polypeptide: Polyhedrin (245 aa).

Belongs to the polyhedrin family.

Its function is as follows. Major component of the virus occlusion bodies, which are large proteinaceous structures (polyhedra), that protect the virus from the outside environment for extended periods until they are ingested by insect larvae. In Lepidoptera (butterflies and moths), this protein is Polyhedrin.